The following is an 888-amino-acid chain: MTSERYNARESEPKWQRRWDDDKIFATQNDDPRPKYYVLEMFPYPSGRIHMGHVRNYTMGDVVARTMRARGFNVLHPMGWDAFGLPAENAAIERKVAPKAWTYDNIAAMKKQLQTMGLSLDWAREFATCDPSYYKHQQKMFLDFLKAGLAEREKRKINWDPVDMTVLANEQVIDGRGWRSGAVVEQREMNQWVFKITRYSQDLLDALDRLDRWPDKVRLMQRNWIGRSEGMLVRFALDAATTPAGESELKIFTTRADTLFGAKFMAIAADHPLALAAAPKNPKIKDFIDECKKRGTAQADIDTAEKQGIDTGIRAVHPFDPEWKLPVYVANFVLMEYGTGAIFGCPAHDQRDLDFVNKYDLGNTPVVCPEGQDPASFVITDVAYDGDGRLINSRFLDGLSIDQAKEEVAKRLETATRDGAPIGERKVNFRLRDWGISRQRYWGCPIPVIHCPKCDVVPVPDADLPVVLPEDVSFDKPGNALDHHPTWKHVTCPKCGGKAVRETDTMDTFVDSSWYFARFTDPWNENAPTTPDVVNKMMPVDQYIGGVEHAILHLLYSRFFTRAMKATGHVGLDEPFAGMFTQGMVVHETYRRKSGEWVSPAELDATMTIESIATDASGEAKTTTKRKVWLRETGEELEIGPIEKMSKSKRNTVDPDDIIGTYGADTARWFMLSDSPPDRDVIWSEEGVKGASRFVQRLWRIANDAAEIAKLAPADRPAEFGPDAIAVRKAAHGALHKVLNGIERLAFNVSLAHIREFANALADSLGKADKPTPDLAFAIREAAIILVQLVAPMMPHLAEECWEVLGQAGLVSEAGWPAVEPALLVEDTITLPVQVNGKKRGDVTVARDAQNPQIEAAVLALDTVKQALDGKPVRKIIIVPQRIVNVVV.

Positions 43–53 (PYPSGRIHMGH) match the 'HIGH' region motif. The 'KMSKS' region motif lies at 644 to 648 (KMSKS). Lysine 647 lines the ATP pocket.

This sequence belongs to the class-I aminoacyl-tRNA synthetase family.

It is found in the cytoplasm. The catalysed reaction is tRNA(Leu) + L-leucine + ATP = L-leucyl-tRNA(Leu) + AMP + diphosphate. The chain is Leucine--tRNA ligase from Rhodopseudomonas palustris (strain BisA53).